The sequence spans 246 residues: 3-deoxy-manno-octulosonate cytidylyltransferase (246 aa).

Belongs to the KdsB family.

It localises to the cytoplasm. It carries out the reaction 3-deoxy-alpha-D-manno-oct-2-ulosonate + CTP = CMP-3-deoxy-beta-D-manno-octulosonate + diphosphate. Its pathway is nucleotide-sugar biosynthesis; CMP-3-deoxy-D-manno-octulosonate biosynthesis; CMP-3-deoxy-D-manno-octulosonate from 3-deoxy-D-manno-octulosonate and CTP: step 1/1. It functions in the pathway bacterial outer membrane biogenesis; lipopolysaccharide biosynthesis. In terms of biological role, activates KDO (a required 8-carbon sugar) for incorporation into bacterial lipopolysaccharide in Gram-negative bacteria. The polypeptide is 3-deoxy-manno-octulosonate cytidylyltransferase (Rickettsia peacockii (strain Rustic)).